The following is a 430-amino-acid chain: Ribosomal protein uS12 methylthiotransferase RimO (430 aa).

Residues 2 to 119 (ISVYSISLGC…WPAMLAHALK (118 aa)) form the MTTase N-terminal domain. [4Fe-4S] cluster contacts are provided by C11, C46, C81, C145, C149, and C152. The Radical SAM core domain occupies 131–361 (STGPSYAWLK…MEVQAEISEE (231 aa)). A TRAM domain is found at 364–430 (AVHEGTRQQV…TRTYDLVALV (67 aa)).

It belongs to the methylthiotransferase family. RimO subfamily. The cofactor is [4Fe-4S] cluster.

Its subcellular location is the cytoplasm. It carries out the reaction L-aspartate(89)-[ribosomal protein uS12]-hydrogen + (sulfur carrier)-SH + AH2 + 2 S-adenosyl-L-methionine = 3-methylsulfanyl-L-aspartate(89)-[ribosomal protein uS12]-hydrogen + (sulfur carrier)-H + 5'-deoxyadenosine + L-methionine + A + S-adenosyl-L-homocysteine + 2 H(+). In terms of biological role, catalyzes the methylthiolation of an aspartic acid residue of ribosomal protein uS12. This chain is Ribosomal protein uS12 methylthiotransferase RimO, found in Nitratidesulfovibrio vulgaris (strain DP4) (Desulfovibrio vulgaris).